The following is a 200-amino-acid chain: Large ribosomal subunit protein bL25 (200 aa).

Belongs to the bacterial ribosomal protein bL25 family. CTC subfamily. In terms of assembly, part of the 50S ribosomal subunit; part of the 5S rRNA/L5/L18/L25 subcomplex. Contacts the 5S rRNA. Binds to the 5S rRNA independently of L5 and L18.

Functionally, this is one of the proteins that binds to the 5S RNA in the ribosome where it forms part of the central protuberance. This Pseudomonas fluorescens (strain Pf0-1) protein is Large ribosomal subunit protein bL25.